A 63-amino-acid chain; its full sequence is Large ribosomal subunit protein bL32 (63 aa).

This sequence belongs to the bacterial ribosomal protein bL32 family.

The protein is Large ribosomal subunit protein bL32 of Acholeplasma laidlawii.